The primary structure comprises 241 residues: Probable transcriptional regulatory protein LMOf2365_1554 (241 aa).

Residues 1-14 are compositionally biased toward polar residues; it reads MSGHSKWNNIQGRK. Residues 1-22 form a disordered region; sequence MSGHSKWNNIQGRKNAQDSKRS.

Belongs to the TACO1 family.

The protein resides in the cytoplasm. The protein is Probable transcriptional regulatory protein LMOf2365_1554 of Listeria monocytogenes serotype 4b (strain F2365).